The chain runs to 329 residues: Secretory carrier-associated membrane protein 2 (329 aa).

2 disordered regions span residues 1-21 and 51-72; these read MSAF…FQDP and VTQL…PTQP. Residues 1–153 are Cytoplasmic-facing; it reads MSAFDTNPFA…DYQRICKMLY (153 aa). Residues 154 to 174 traverse the membrane as a helical segment; that stretch reads YLWMLHSVTLFLNLLACLAWF. The Lumenal segment spans residues 175–181; the sequence is SGNSSKG. The helical transmembrane segment at 182 to 202 threads the bilayer; it reads VDFGLSILWFLIFTPCAFLCW. Residues 203-218 lie on the Cytoplasmic side of the membrane; sequence YRPIYKAFRSDNSFSF. The segment at 203–218 is interaction with SLC9A7; that stretch reads YRPIYKAFRSDNSFSF. The helical transmembrane segment at 219-239 threads the bilayer; that stretch reads FVFFFVFFCQIGIYIIQLVGI. The Lumenal portion of the chain corresponds to 240-262; sequence PGLGDSGWIAALSTLDNHSLAIS. The helical transmembrane segment at 263-283 threads the bilayer; it reads VIMMVVAGFFTLCAVLSVFLL. Over 284 to 329 the chain is Cytoplasmic; that stretch reads QRVHSLYRRTGASFQQAQEEFSQGIFSSRTFHRAASSAAQGAFQGN. A phosphoserine mark is found at Ser319 and Ser320.

The protein belongs to the SCAMP family. Interacts with SLC6A4 and SLC9A7. Interacts with SLC9A5; this interaction regulates SLC9A5 cell-surface targeting and SLC9A5 activity. As to expression, widely expressed.

The protein resides in the golgi apparatus. It localises to the trans-Golgi network membrane. It is found in the recycling endosome membrane. Functions in post-Golgi recycling pathways. Acts as a recycling carrier to the cell surface. In Homo sapiens (Human), this protein is Secretory carrier-associated membrane protein 2 (SCAMP2).